We begin with the raw amino-acid sequence, 410 residues long: Gamma-glutamyl phosphate reductase (410 aa).

It belongs to the gamma-glutamyl phosphate reductase family.

The protein localises to the cytoplasm. It catalyses the reaction L-glutamate 5-semialdehyde + phosphate + NADP(+) = L-glutamyl 5-phosphate + NADPH + H(+). The protein operates within amino-acid biosynthesis; L-proline biosynthesis; L-glutamate 5-semialdehyde from L-glutamate: step 2/2. Its function is as follows. Catalyzes the NADPH-dependent reduction of L-glutamate 5-phosphate into L-glutamate 5-semialdehyde and phosphate. The product spontaneously undergoes cyclization to form 1-pyrroline-5-carboxylate. The sequence is that of Gamma-glutamyl phosphate reductase from Campylobacter jejuni subsp. jejuni serotype O:23/36 (strain 81-176).